A 475-amino-acid polypeptide reads, in one-letter code: Protein ABCI7, chloroplastic (475 aa).

The N-terminal 36 residues, 1–36, are a transit peptide targeting the chloroplast; that stretch reads MAAATVLGRLSLIPNLSSKPKLKSNRRTTSTSVSVR.

Interacts with NAP7.

It localises to the plastid. It is found in the chloroplast. This chain is Protein ABCI7, chloroplastic (ABCI7), found in Arabidopsis thaliana (Mouse-ear cress).